Reading from the N-terminus, the 575-residue chain is Thiol:disulfide interchange protein DsbD (575 aa).

Positions 1–24 are cleaved as a signal peptide; that stretch reads MIKRTLMLFLLLCSPLLTPAAANA. Intrachain disulfides connect Cys126/Cys132 and Cys192/Cys314. The next 8 helical transmembrane spans lie at 180–200, 216–236, 253–273, 297–317, 336–356, 367–387, 394–414, and 425–445; these read AILI…YPLI, IFWL…LLGL, YVLI…FGLY, LFGV…CTTA, GLTL…VTLF, WMQY…VFLL, AWGI…GFVL, and VIQL…QDWF. Residues 444 to 575 form the Thioredoxin domain; that stretch reads WFWGTTVTQQ…FNEHLQHLPK (132 aa). Cysteines 490 and 493 form a disulfide.

The protein belongs to the thioredoxin family. DsbD subfamily.

The protein resides in the cell inner membrane. It carries out the reaction [protein]-dithiol + NAD(+) = [protein]-disulfide + NADH + H(+). The catalysed reaction is [protein]-dithiol + NADP(+) = [protein]-disulfide + NADPH + H(+). Required to facilitate the formation of correct disulfide bonds in some periplasmic proteins and for the assembly of the periplasmic c-type cytochromes. Acts by transferring electrons from cytoplasmic thioredoxin to the periplasm. This transfer involves a cascade of disulfide bond formation and reduction steps. This Photorhabdus laumondii subsp. laumondii (strain DSM 15139 / CIP 105565 / TT01) (Photorhabdus luminescens subsp. laumondii) protein is Thiol:disulfide interchange protein DsbD.